The following is a 493-amino-acid chain: Geraniol 8-hydroxylase (493 aa).

At 1–6 (MDYLTI) the chain is on the lumenal side. A helical transmembrane segment spans residues 7-23 (ILTLLFALTLYEAFSYL). Topologically, residues 24-493 (SRRTKNLPPG…HPLRAVPSTL (470 aa)) are cytoplasmic. Cys436 serves as a coordination point for heme.

It belongs to the cytochrome P450 family. Heme is required as a cofactor. As to expression, expressed in roots, stems, leaves and flower buds. Hardly detected in mature flowers and fruits. Expressed in the internal phloem-associated parenchyma.

The protein localises to the endoplasmic reticulum membrane. It catalyses the reaction (2E)-geraniol + reduced [NADPH--hemoprotein reductase] + O2 = (6E)-8-hydroxygeraniol + oxidized [NADPH--hemoprotein reductase] + H2O + H(+). Hydroxylase involved in the biosynthesis of hydroxygeraniol, a precursor of the terpenoid indole alkaloids such as vinblastine and vincristine. Also able to hydroxylate in vitro nerol and to catalyze 3'-hydroxylation of the flavanone naringenin to form eriodictyol. No activity with apigenin, kaempferol, p-coumaric acid and ferulic acid as substrates. This is Geraniol 8-hydroxylase (CYP76B6) from Catharanthus roseus (Madagascar periwinkle).